The primary structure comprises 834 residues: Protein translocase subunit SecA (834 aa).

Residues glutamine 85, 103-107 (GEGKT), and aspartate 491 contribute to the ATP site. Cysteine 818, cysteine 820, cysteine 829, and cysteine 830 together coordinate Zn(2+).

The protein belongs to the SecA family. As to quaternary structure, monomer and homodimer. Part of the essential Sec protein translocation apparatus which comprises SecA, SecYEG and auxiliary proteins SecDF. Other proteins may also be involved. Zn(2+) serves as cofactor.

The protein resides in the cell membrane. It localises to the cytoplasm. The enzyme catalyses ATP + H2O + cellular proteinSide 1 = ADP + phosphate + cellular proteinSide 2.. Its function is as follows. Part of the Sec protein translocase complex. Interacts with the SecYEG preprotein conducting channel. Has a central role in coupling the hydrolysis of ATP to the transfer of proteins into and across the cell membrane, serving as an ATP-driven molecular motor driving the stepwise translocation of polypeptide chains across the membrane. This Clostridium kluyveri (strain ATCC 8527 / DSM 555 / NBRC 12016 / NCIMB 10680 / K1) protein is Protein translocase subunit SecA.